The chain runs to 2241 residues: GON-4-like protein (2241 aa).

Disordered regions lie at residues 1–46 (MLPC…SSVS) and 122–259 (KLHA…GRGQ). Over residues 30-40 (SAVKPESDQVK) the composition is skewed to basic and acidic residues. Positions 122-135 (KLHATGSKRGKKMT) are enriched in basic residues. Positions 143-152 (QEDRCDHLTL) are enriched in basic and acidic residues. Residues 183-201 (PSGSQSAKPVSQPRKSTQP) show a composition bias toward polar residues. Position 206 is a phosphoserine (Ser-206). A compositionally biased stretch (basic residues) spans 243–255 (RRKKKKGTKRKRD). Ser-346 is subject to Phosphoserine. A compositionally biased stretch (acidic residues) spans 366 to 394 (EDDSSDEEYQPDDEEEDETAEESLLESDV). The segment at 366–460 (EDDSSDEEYQ…PPKPKQTRDS (95 aa)) is disordered. The tract at residues 600 to 1339 (EMGFSNMEDD…EEAREEISGS (740 aa)) is required for interaction with YY1, SIN3A and HDAC1, and transcriptional repression activity. Position 775 is a phosphoserine (Ser-775). 2 disordered regions span residues 1008-1031 (PSPSLQPSFNPGKTPARSTHSEAP) and 1111-1131 (RKPYVRRRPSKRRGVKASPCM). Basic residues predominate over residues 1111–1125 (RKPYVRRRPSKRRGV). Phosphoserine is present on Ser-1268. Disordered stretches follow at residues 1301 to 1320 (ALEPLPQGIQESLNNPTPGD) and 1356 to 1601 (LDTG…RARA). The span at 1386–1416 (PTKTPSSSQEPPDEGTSGTDVNKGSSKNALS) shows a compositional bias: polar residues. Residue Ser-1426 is modified to Phosphoserine. Polar residues predominate over residues 1434–1443 (SSSVDGQSVG). Acidic residues-rich tracts occupy residues 1458–1476 (EEEEEEDFDDLTQDEEDEM) and 1510–1534 (GESEEENSQEENSEPEEEEEEEAEG). The segment covering 1586–1600 (RNNHRARNKRGSRAR) has biased composition (basic residues). 2 consecutive PAH domains span residues 1624–1696 (EQKD…LLPE) and 1706–1777 (EQQA…FDHL). Positions 1809–1960 (PDVEEEEEPP…AVGSTLPSPR (152 aa)) are disordered. Composition is skewed to basic and acidic residues over residues 1836–1848 (NHDKETEWPDGAK) and 1879–1901 (CDSKSYKSKEPHELVGSSPHREA). 3 positions are modified to phosphoserine: Ser-1896, Ser-1902, and Ser-1977. Disordered regions lie at residues 2002–2025 (EVRSCPKASPRLQKEREGQKAVSE), 2039–2149 (EKLP…VSST), and 2208–2241 (CEASSEDEDDATSTSNADQLSDHGDLLSEEELDE). A Phosphoserine modification is found at Ser-2107. The segment covering 2140 to 2149 (CANNSKVSST) has biased composition (polar residues). One can recognise a Myb-like domain in the interval 2148-2201 (STGEKVVLWTREADRVILTMCQEQGAQPQTFNIISQQLGNKTPAEVSHRFRELM).

As to quaternary structure, found in a complex with YY1, SIN3A and HDAC1.

It localises to the nucleus. In terms of biological role, has transcriptional repressor activity, probably as part of a complex with YY1, SIN3A and HDAC1. Required for B cell lymphopoiesis. The protein is GON-4-like protein (GON4L) of Homo sapiens (Human).